Reading from the N-terminus, the 309-residue chain is MEMO1 family protein C4H3.04c (309 aa).

Belongs to the MEMO1 family.

The chain is MEMO1 family protein C4H3.04c from Schizosaccharomyces pombe (strain 972 / ATCC 24843) (Fission yeast).